Here is a 1235-residue protein sequence, read N- to C-terminus: Serine/threonine-protein kinase TAO2 (1235 aa).

Ser9 carries the phosphoserine modification. The Protein kinase domain maps to 28–281 (FSDLREIGHG…SEVLLKHRFV (254 aa)). ATP is bound by residues 34–42 (IGHGSFGAV) and Lys57. Asp151 serves as the catalytic Proton acceptor. Ser181 carries the phosphoserine modification. Residues 318–457 (QEAPNGPGAE…TSTTSSARRR (140 aa)) form a disordered region. Over residues 350-374 (SSHSVPSMSISASSQSSSVNSLADA) the composition is skewed to low complexity. Positions 375–393 (SDNEEEEEEEEEEEEEEEG) are enriched in acidic residues. Positions 394–409 (PEAREMAMMQEGEHTV) are enriched in basic and acidic residues. A Phosphoserine modification is found at Ser414. 2 coiled-coil regions span residues 486–547 (SALR…RRHQ) and 574–601 (KELA…LQEN). Ser656 is subject to Phosphoserine. A coiled-coil region spans residues 681–713 (LRQHEATRELELRQLQAVQRTRAELTRLQHQTE). Disordered stretches follow at residues 732–777 (HAAQ…QPCS), 804–835 (KEGA…GSLV), and 891–939 (QGPA…RPCP). The span at 766–777 (NTGTPIEQQPCS) shows a compositional bias: polar residues. Phosphoserine occurs at positions 777, 825, and 827. Over residues 899–908 (PEEEEEEEEG) the composition is skewed to acidic residues. Residues 924–934 (PDIPPEPPPTH) show a composition bias toward pro residues. 2 consecutive transmembrane segments (helical) span residues 965–985 (LLPL…GGGL) and 987–1007 (AALL…LLLC). His1011 and Gly1031 each carry phosphoserine. The next 3 membrane-spanning stretches (helical) occupy residues 1012-1032 (LPSS…VLGL), 1043-1063 (LGLG…LVAM), and 1166-1186 (QGLA…WGLL). The segment at 1198-1235 (LPRSQRQLGPPASRQPLPGTLAGRRSRTRQSRALPPWR) is disordered.

This sequence belongs to the protein kinase superfamily. STE Ser/Thr protein kinase family. STE20 subfamily. Interacts with MAP2K3 and MAP2K6. Self-associates. Interacts with tubulins through the C-terminal domain. Interacts with MAP3K7 and interferes with MAP3K7-binding to CHUK and thus prevents NF-kappa-B activation. Isoform 2 interacts with PCDH8; this complex may also include CDH2. Mg(2+) is required as a cofactor. Post-translationally, isoforms 1 and 2 are autophosphorylated. In terms of processing, C-terminal cleavage of isoform 1 and subsequent nuclear localization requires CASP9 activity. Autophosphorylated. Phosphorylated by ATM. Post-translationally, phosphorylated on Ser-1031 by MAPK14. This phosphorylation is required PCDH8 for endocytosis. As to expression, ubiquitously expressed, with a higher level of expression in testis and brain.

The protein localises to the cytoplasmic vesicle membrane. It is found in the cytoplasm. Its subcellular location is the cytoskeleton. The protein resides in the nucleus. It localises to the cell projection. The protein localises to the dendrite. The catalysed reaction is L-seryl-[protein] + ATP = O-phospho-L-seryl-[protein] + ADP + H(+). The enzyme catalyses L-threonyl-[protein] + ATP = O-phospho-L-threonyl-[protein] + ADP + H(+). With respect to regulation, selectively inhibited by the enantiopure organoruthenium inhibitor 9E1. Activated following arsenic trioxide (As(2)O(3)) treatment. Functionally, serine/threonine-protein kinase involved in different processes such as membrane blebbing and apoptotic bodies formation DNA damage response and MAPK14/p38 MAPK stress-activated MAPK cascade. Phosphorylates itself, MBP, activated MAPK8, MAP2K3, MAP2K6 and tubulins. Activates the MAPK14/p38 MAPK signaling pathway through the specific activation and phosphorylation of the upstream MAP2K3 and MAP2K6 kinases. In response to DNA damage, involved in the G2/M transition DNA damage checkpoint by activating the p38/MAPK14 stress-activated MAPK cascade, probably by mediating phosphorylation of upstream MAP2K3 and MAP2K6 kinases. Isoform 1, but not isoform 2, plays a role in apoptotic morphological changes, including cell contraction, membrane blebbing and apoptotic bodies formation. This function, which requires the activation of MAPK8/JNK and nuclear localization of C-terminally truncated isoform 1, may be linked to the mitochondrial CASP9-associated death pathway. Isoform 1 binds to microtubules and affects their organization and stability independently of its kinase activity. Prevents MAP3K7-mediated activation of CHUK, and thus NF-kappa-B activation, but not that of MAPK8/JNK. May play a role in the osmotic stress-MAPK8 pathway. Isoform 2, but not isoform 1, is required for PCDH8 endocytosis. Following homophilic interactions between PCDH8 extracellular domains, isoform 2 phosphorylates and activates MAPK14/p38 MAPK which in turn phosphorylates isoform 2. This process leads to PCDH8 endocytosis and CDH2 cointernalization. Both isoforms are involved in MAPK14 phosphorylation. This Homo sapiens (Human) protein is Serine/threonine-protein kinase TAO2 (TAOK2).